The chain runs to 946 residues: Villin-4 (946 aa).

Gelsolin-like repeat units follow at residues N28 to K109, V152 to K219, L274 to F339, and E641 to F715. Disordered stretches follow at residues A744–P789, P801–Q832, and G844–D902. Positions Q765 to H777 are enriched in polar residues. The segment covering S874–N883 has biased composition (acidic residues). The region spanning D881 to F946 is the HP domain.

The protein belongs to the villin/gelsolin family.

It localises to the cytoplasm. Its subcellular location is the cytoskeleton. In terms of biological role, ca(2+)-regulated actin-binding protein. Binds actin microfilaments (MFs). Involved in actin filament bundling, severing and capping. Caps the barbed end of actin filaments and is able to sever them in a calcium-dependent manner. This chain is Villin-4, found in Oryza sativa subsp. japonica (Rice).